The following is a 584-amino-acid chain: Aspartate--tRNA(Asp/Asn) ligase (584 aa).

L-aspartate is bound at residue Glu-173. Residues 197-200 (QLFK) form an aspartate region. Residue Arg-219 participates in L-aspartate binding. ATP is bound by residues 219 to 221 (RDE) and Gln-228. Position 446 (His-446) interacts with L-aspartate. Glu-476 is a binding site for ATP. Residue Arg-483 coordinates L-aspartate. Residue 528 to 531 (GLDR) coordinates ATP.

The protein belongs to the class-II aminoacyl-tRNA synthetase family. Type 1 subfamily. As to quaternary structure, homodimer.

Its subcellular location is the cytoplasm. It catalyses the reaction tRNA(Asx) + L-aspartate + ATP = L-aspartyl-tRNA(Asx) + AMP + diphosphate. In terms of biological role, aspartyl-tRNA synthetase with relaxed tRNA specificity since it is able to aspartylate not only its cognate tRNA(Asp) but also tRNA(Asn). Reaction proceeds in two steps: L-aspartate is first activated by ATP to form Asp-AMP and then transferred to the acceptor end of tRNA(Asp/Asn). The chain is Aspartate--tRNA(Asp/Asn) ligase from Sulfurovum sp. (strain NBC37-1).